A 132-amino-acid chain; its full sequence is CDGSH iron-sulfur domain-containing protein 2 homolog (132 aa).

Residues 1–35 are Lumenal-facing; the sequence is MEPISHLVKSSLPNYLSSLPVPDSLGGWFKLSFKD. Residues 36–58 form a helical membrane-spanning segment; sequence WLALIPPTAVLAGLGYTAYLAFC. Residues 59–132 lie on the Cytoplasmic side of the membrane; sequence PAAQCSAKSA…VGPVVVSKKK (74 aa). Residues Cys-97, Cys-99, Cys-108, and His-112 each contribute to the [2Fe-2S] cluster site.

This sequence belongs to the CISD protein family. CISD2 subfamily. [2Fe-2S] cluster is required as a cofactor.

The protein localises to the endoplasmic reticulum membrane. This is CDGSH iron-sulfur domain-containing protein 2 homolog from Drosophila grimshawi (Hawaiian fruit fly).